Here is a 427-residue protein sequence, read N- to C-terminus: Acyl-CoA hydrolase 2 (427 aa).

15 to 83 (LLQKLPSSSL…FLLKQYDYFG (69 aa)) is an a nucleoside 3',5'-cyclic phosphate binding site. Active-site charge relay system residues include Asp337, Ser359, and Gln409. Positions 425–427 (SKL) match the Microbody targeting signal motif.

It belongs to the C/M/P thioester hydrolase family. In terms of assembly, homotetramer. As to expression, mostly expressed in leaves and flowers, and, to a lower extent, in seedlings and siliques.

It localises to the peroxisome matrix. The catalysed reaction is a fatty acyl-CoA + H2O = a fatty acid + CoA + H(+). It catalyses the reaction dodecanoyl-CoA + H2O = dodecanoate + CoA + H(+). It carries out the reaction tetradecanoyl-CoA + H2O = tetradecanoate + CoA + H(+). The enzyme catalyses octadecanoyl-CoA + H2O = octadecanoate + CoA + H(+). The catalysed reaction is (9Z)-hexadecenoyl-CoA + H2O = (9Z)-hexadecenoate + CoA + H(+). It catalyses the reaction (5Z,8Z,11Z,14Z)-eicosatetraenoyl-CoA + H2O = (5Z,8Z,11Z,14Z)-eicosatetraenoate + CoA + H(+). It carries out the reaction hexadecanoyl-CoA + H2O = hexadecanoate + CoA + H(+). The enzyme catalyses (9Z)-octadecenoyl-CoA + H2O = (9Z)-octadecenoate + CoA + H(+). The catalysed reaction is (9Z,12Z)-octadecadienoyl-CoA + H2O = (9Z,12Z)-octadecadienoate + CoA + H(+). It participates in lipid metabolism; fatty acid metabolism. Its activity is regulated as follows. Insensitive to feedback inhibition by free coenzyme A (CoASH). Its function is as follows. Catalyzes the hydrolysis of acyl-CoAs into free fatty acids and coenzyme A (CoASH), regulating their respective intracellular levels. Active with both medium chain and long chain acyl-CoAs (e.g. 12:0-CoA, 14:0-CoA, 16:0-CoA, 18:0-CoA, 16:1-CoA, 18:1-CoA, 18:2-CoA and 20:4-CoA) as substrates, palmitoleoyl-CoA (16:1-CoA) being the favorite substrate. This Arabidopsis thaliana (Mouse-ear cress) protein is Acyl-CoA hydrolase 2.